The primary structure comprises 232 residues: Small ribosomal subunit protein uS3 (232 aa).

In terms of domain architecture, KH type-2 spans 39–107 (VRRFLEQRLK…PVHVNIEEVR (69 aa)).

The protein belongs to the universal ribosomal protein uS3 family. Part of the 30S ribosomal subunit. Forms a tight complex with proteins S10 and S14.

Functionally, binds the lower part of the 30S subunit head. Binds mRNA in the 70S ribosome, positioning it for translation. This chain is Small ribosomal subunit protein uS3, found in Chromohalobacter salexigens (strain ATCC BAA-138 / DSM 3043 / CIP 106854 / NCIMB 13768 / 1H11).